Reading from the N-terminus, the 154-residue chain is Putative pre-16S rRNA nuclease (154 aa).

Belongs to the YqgF nuclease family.

Its subcellular location is the cytoplasm. Functionally, could be a nuclease involved in processing of the 5'-end of pre-16S rRNA. This chain is Putative pre-16S rRNA nuclease, found in Pelotomaculum thermopropionicum (strain DSM 13744 / JCM 10971 / SI).